Here is a 169-residue protein sequence, read N- to C-terminus: Sorting nexin-24 (169 aa).

Met1 bears the N-acetylmethionine mark. The PX domain maps to 1-125; that stretch reads MEVYIPSFRY…SFDETESEES (125 aa). Residues Arg38, Ser40, Lys61, and Arg74 each contribute to the a 1,2-diacyl-sn-glycero-3-phospho-(1D-myo-inositol-3-phosphate) site. 2 positions are modified to phosphoserine: Ser113 and Ser116.

This sequence belongs to the sorting nexin family.

It is found in the cytoplasmic vesicle membrane. Functionally, may be involved in several stages of intracellular trafficking. In Bos taurus (Bovine), this protein is Sorting nexin-24 (SNX24).